A 610-amino-acid polypeptide reads, in one-letter code: Major facilitator superfamily multidrug transporter FLU1 (610 aa).

2 N-linked (GlcNAc...) asparagine glycosylation sites follow: asparagine 3 and asparagine 21. Positions 47–58 are enriched in polar residues; that stretch reads GPTDSVESSSNT. Residues 47-74 form a disordered region; sequence GPTDSVESSSNTADEENEINSFNAQNVK. A run of 11 helical transmembrane segments spans residues 165 to 185, 209 to 229, 231 to 251, 262 to 282, 292 to 312, 323 to 343, 408 to 428, 437 to 457, 478 to 498, 507 to 527, and 530 to 550; these read ILYC…SAMF, LFVF…ELFG, KLVM…VATA, FFAG…MADM, IAIF…LGAF, WTSY…TFLL, AFIY…FLGE, ELPY…IMLF, LEPM…LGWT, WIVP…IFLP, and NYII…NTFI. N-linked (GlcNAc...) asparagine glycosylation is present at asparagine 568. A helical transmembrane segment spans residues 573-593; sequence WASTLLGCIGILLLPMPFVFY.

The protein belongs to the major facilitator superfamily. DHA1 family. Polyamines/proton antiporter (TC 2.A.1.2.16) subfamily.

The protein localises to the cell membrane. Functionally, major facilitator superfamily transporter that mediates resistance to structurally and functionally unrelated compounds including cycloheximide but also azoles such as fuconazole, ketoconazole and itraconazole. Also mediates efflux of histatin 5, a salivary human antimicrobial peptide, and is responsible for reduction of its toxicity in C.albicans. In Candida albicans (strain SC5314 / ATCC MYA-2876) (Yeast), this protein is Major facilitator superfamily multidrug transporter FLU1.